The chain runs to 310 residues: Ribosomal RNA small subunit methyltransferase H (310 aa).

S-adenosyl-L-methionine-binding positions include 32–34 (GGH), Asp-52, Phe-79, Asp-100, and Gln-107.

It belongs to the methyltransferase superfamily. RsmH family.

Its subcellular location is the cytoplasm. The catalysed reaction is cytidine(1402) in 16S rRNA + S-adenosyl-L-methionine = N(4)-methylcytidine(1402) in 16S rRNA + S-adenosyl-L-homocysteine + H(+). Specifically methylates the N4 position of cytidine in position 1402 (C1402) of 16S rRNA. This Bacillus cytotoxicus (strain DSM 22905 / CIP 110041 / 391-98 / NVH 391-98) protein is Ribosomal RNA small subunit methyltransferase H.